A 498-amino-acid polypeptide reads, in one-letter code: Probable cytosol aminopeptidase (498 aa).

Mn(2+)-binding residues include lysine 263 and aspartate 268. Lysine 275 is an active-site residue. The Mn(2+) site is built by aspartate 286, aspartate 345, and glutamate 347. Residue arginine 349 is part of the active site.

Belongs to the peptidase M17 family. It depends on Mn(2+) as a cofactor.

The protein resides in the cytoplasm. The catalysed reaction is Release of an N-terminal amino acid, Xaa-|-Yaa-, in which Xaa is preferably Leu, but may be other amino acids including Pro although not Arg or Lys, and Yaa may be Pro. Amino acid amides and methyl esters are also readily hydrolyzed, but rates on arylamides are exceedingly low.. It carries out the reaction Release of an N-terminal amino acid, preferentially leucine, but not glutamic or aspartic acids.. Its function is as follows. Presumably involved in the processing and regular turnover of intracellular proteins. Catalyzes the removal of unsubstituted N-terminal amino acids from various peptides. The polypeptide is Probable cytosol aminopeptidase (Rhodopseudomonas palustris (strain BisA53)).